The following is a 335-amino-acid chain: MNTEATHDQNEALTTGARLRNAREQLGLSQQAVAERLCLKVSTVRDIEEDKAPADLASTFLRGYIRSYARLVHIPEEELLPGLEKQAPLRAAKVAPMQSFSLGKRRKKRDGWLMTFTWLVLFVVIGLSGAWWWQDHKAQQEEITTMADQSSAELNNNQSQSVPLDTSTTTDQAMATTPTSPVDTTATNTQTPAVTAPAPAVDPQQNAVVPPSQANVDTAATPAPAATTTPDGAAPLPTDQAGVTTPAVDPNALVMNFTADCWLEVTDATGKKLFSGMQRKDGNLNLTGQAPYKLKIGAPAAVQIQYQGKPVDLSRFIRTNQVARLTLNAEQSPAQ.

Residues 1–111 (MNTEATHDQN…LGKRRKKRDG (111 aa)) are Cytoplasmic-facing. In terms of domain architecture, HTH cro/C1-type spans 19–71 (LRNAREQLGLSQQAVAERLCLKVSTVRDIEEDKAPADLASTFLRGYIRSYARL). Positions 30-49 (QQAVAERLCLKVSTVRDIEE) form a DNA-binding region, H-T-H motif. The helical; Signal-anchor for type II membrane protein transmembrane segment at 112 to 132 (WLMTFTWLVLFVVIGLSGAWW) threads the bilayer. Residues 133 to 335 (WQDHKAQQEE…TLNAEQSPAQ (203 aa)) lie on the Periplasmic side of the membrane. Positions 148 to 164 (DQSSAELNNNQSQSVPL) are enriched in polar residues. Residues 148–244 (DQSSAELNNN…PLPTDQAGVT (97 aa)) form a disordered region. Low complexity-rich tracts occupy residues 165 to 205 (DTST…DPQQ) and 217 to 239 (DTAA…LPTD).

This sequence belongs to the RodZ family.

It is found in the cell inner membrane. Functionally, cytoskeletal protein that is involved in cell-shape control through regulation of the length of the long axis. This is Cytoskeleton protein RodZ from Escherichia coli O127:H6 (strain E2348/69 / EPEC).